A 258-amino-acid chain; its full sequence is Na(+)-translocating NADH-quinone reductase subunit C (258 aa).

Residues 14–34 traverse the membrane as a helical segment; sequence LIVVLAVSLICSVIVAGAVVG. Residue Ser-226 is modified to FMN phosphoryl serine.

The protein belongs to the NqrC family. In terms of assembly, composed of six subunits; NqrA, NqrB, NqrC, NqrD, NqrE and NqrF. FMN is required as a cofactor.

It localises to the cell inner membrane. The catalysed reaction is a ubiquinone + n Na(+)(in) + NADH + H(+) = a ubiquinol + n Na(+)(out) + NAD(+). NQR complex catalyzes the reduction of ubiquinone-1 to ubiquinol by two successive reactions, coupled with the transport of Na(+) ions from the cytoplasm to the periplasm. NqrA to NqrE are probably involved in the second step, the conversion of ubisemiquinone to ubiquinol. The protein is Na(+)-translocating NADH-quinone reductase subunit C of Neisseria meningitidis serogroup A / serotype 4A (strain DSM 15465 / Z2491).